The sequence spans 595 residues: Arginine--tRNA ligase (595 aa).

A 'HIGH' region motif is present at residues 132–142 (ANPTGPLHVGH).

It belongs to the class-I aminoacyl-tRNA synthetase family. In terms of assembly, monomer.

The protein resides in the cytoplasm. The enzyme catalyses tRNA(Arg) + L-arginine + ATP = L-arginyl-tRNA(Arg) + AMP + diphosphate. The protein is Arginine--tRNA ligase of Cupriavidus taiwanensis (strain DSM 17343 / BCRC 17206 / CCUG 44338 / CIP 107171 / LMG 19424 / R1) (Ralstonia taiwanensis (strain LMG 19424)).